The chain runs to 627 residues: Protein EXECUTER 2, chloroplastic (627 aa).

Disordered regions lie at residues 1 to 34 (MSAATACASPAAARPPLHIPLRSPPSAAHLPSAA), 212 to 277 (PTKG…AKDS), and 308 to 359 (EAEL…SKSP). A chloroplast-targeting transit peptide spans 1 to 45 (MSAATACASPAAARPPLHIPLRSPPSAAHLPSAAASRRASSAACR). Residues 217–229 (SSASSVSSATAES) show a composition bias toward low complexity. 2 stretches are compositionally biased toward acidic residues: residues 308 to 321 (EAELASDSSEELVQ) and 331 to 353 (SLEDSTTEELQQDDVPDGDSDSA).

It localises to the plastid. Its subcellular location is the chloroplast. In terms of biological role, together with EX1, enables higher plants to perceive singlet oxygen as a stress signal in plastid that activates a genetically determined nuclear stress response program which triggers a programmed cell death (PCD). This transfer of singlet oxygen-induced stress-related signals from the plastid to the nucleus that triggers genetically controlled PCD pathway is unique to photosynthetic eukaryotes and operates under mild stress conditions, impeding photosystem II (PSII) without causing photooxidative damage of the plant. This is Protein EXECUTER 2, chloroplastic from Oryza sativa subsp. japonica (Rice).